The following is a 213-amino-acid chain: Cell division protein SepF (213 aa).

The segment at 27-103 is disordered; the sequence is VDAPAPRRAP…GSLRGSAPTR (77 aa). Basic and acidic residues-rich tracts occupy residues 35–51 and 72–90; these read APVEDRRYPRRGERFAD and DEDRFVSRHAPSREFDRPA.

This sequence belongs to the SepF family. Homodimer. Interacts with FtsZ.

It is found in the cytoplasm. Cell division protein that is part of the divisome complex and is recruited early to the Z-ring. Probably stimulates Z-ring formation, perhaps through the cross-linking of FtsZ protofilaments. Its function overlaps with FtsA. This Mycobacteroides abscessus (strain ATCC 19977 / DSM 44196 / CCUG 20993 / CIP 104536 / JCM 13569 / NCTC 13031 / TMC 1543 / L948) (Mycobacterium abscessus) protein is Cell division protein SepF.